Here is a 242-residue protein sequence, read N- to C-terminus: 7-cyano-7-deazaguanine synthase (242 aa).

An ATP-binding site is contributed by 13 to 23 (FSGGQDSSVCL). Residues C201, C216, C219, and C222 each contribute to the Zn(2+) site.

Belongs to the QueC family. It depends on Zn(2+) as a cofactor.

The catalysed reaction is 7-carboxy-7-deazaguanine + NH4(+) + ATP = 7-cyano-7-deazaguanine + ADP + phosphate + H2O + H(+). Its pathway is purine metabolism; 7-cyano-7-deazaguanine biosynthesis. Catalyzes the ATP-dependent conversion of 7-carboxy-7-deazaguanine (CDG) to 7-cyano-7-deazaguanine (preQ(0)). The chain is 7-cyano-7-deazaguanine synthase from Caulobacter vibrioides (strain ATCC 19089 / CIP 103742 / CB 15) (Caulobacter crescentus).